The primary structure comprises 489 residues: Potassium voltage-gated channel subfamily A member 7 (489 aa).

The chain crosses the membrane as a helical span at residues 176-196 (VLAVVSVLVILVSIVVFCLET). Asparagine 224 carries an N-linked (GlcNAc...) asparagine glycan. The chain crosses the membrane as a helical span at residues 242–262 (FFVVETLCICWFSFELLVRLV). Residue cysteine 264 is the site of S-palmitoyl cysteine attachment. The chain crosses the membrane as a helical span at residues 274-294 (VMNLIDFVAILPYFVALGTEL). The chain crosses the membrane as a helical; Voltage-sensor span at residues 309-328 (ILRVIRLVRVFRIFKLSRHS). A helical membrane pass occupies residues 345-365 (LGLLIFFLFIGVVLFSSAVYF). The Selectivity filter motif lies at 391 to 396 (TVGYGD). The helical transmembrane segment at 406–426 (IVGSLCAIAGVLTISLPVPVI) threads the bilayer.

It belongs to the potassium channel family. A (Shaker) (TC 1.A.1.2) subfamily. Kv1.7/KCNA7 sub-subfamily. In terms of assembly, heterotetramer of potassium channel proteins. As to expression, detected in heart, skeletal muscle, brain, and pancreatic islet cells.

The protein resides in the membrane. It carries out the reaction K(+)(in) = K(+)(out). Its function is as follows. Mediates the voltage-dependent potassium ion permeability of excitable membranes. Assuming opened or closed conformations in response to the voltage difference across the membrane, the protein forms a potassium-selective channel through which potassium ions may pass in accordance with their electrochemical gradient. Channels formed by isoform 1 inactivate faster than channels formed by isoform 2. The chain is Potassium voltage-gated channel subfamily A member 7 (Kcna7) from Mus musculus (Mouse).